Reading from the N-terminus, the 259-residue chain is Deoxyribose-phosphate aldolase (259 aa).

The Proton donor/acceptor role is filled by aspartate 102. The active-site Schiff-base intermediate with acetaldehyde is lysine 167. Lysine 201 acts as the Proton donor/acceptor in catalysis.

The protein belongs to the DeoC/FbaB aldolase family. DeoC type 2 subfamily.

It is found in the cytoplasm. It catalyses the reaction 2-deoxy-D-ribose 5-phosphate = D-glyceraldehyde 3-phosphate + acetaldehyde. The protein operates within carbohydrate degradation; 2-deoxy-D-ribose 1-phosphate degradation; D-glyceraldehyde 3-phosphate and acetaldehyde from 2-deoxy-alpha-D-ribose 1-phosphate: step 2/2. Its function is as follows. Catalyzes a reversible aldol reaction between acetaldehyde and D-glyceraldehyde 3-phosphate to generate 2-deoxy-D-ribose 5-phosphate. This chain is Deoxyribose-phosphate aldolase, found in Enterobacter sp. (strain 638).